A 137-amino-acid chain; its full sequence is Mobilization protein B (137 aa).

In terms of assembly, interacts with MobA and MobC to form the relaxosome.

In terms of biological role, this protein is essential to promote the specific transfer of the plasmid in the presence of conjugative plasmids. The protein is Mobilization protein B (mobB) of Escherichia coli.